The chain runs to 135 residues: MPPKARAGAAVKKVRRKERKNVAHGQAHIKSTFNNTIVSVTDPTGAVISWASAGQVGFKGSRKSTPFAAQLAAEAAARRAMEHGMRKVDVFVKGPGSGRETAIRSLQAVGLEVGQISDVTPQPHNGCRPPKRRRV.

Residues 1–11 (MPPKARAGAAV) show a composition bias toward low complexity. The tract at residues 1–22 (MPPKARAGAAVKKVRRKERKNV) is disordered.

It belongs to the universal ribosomal protein uS11 family. In terms of assembly, part of the 30S ribosomal subunit. Interacts with proteins S7 and S18. Binds to IF-3.

In terms of biological role, located on the platform of the 30S subunit, it bridges several disparate RNA helices of the 16S rRNA. Forms part of the Shine-Dalgarno cleft in the 70S ribosome. The sequence is that of Small ribosomal subunit protein uS11 from Salinispora tropica (strain ATCC BAA-916 / DSM 44818 / JCM 13857 / NBRC 105044 / CNB-440).